A 374-amino-acid polypeptide reads, in one-letter code: Isopentenyl-diphosphate delta-isomerase (374 aa).

13-14 (RK) provides a ligand contact to substrate. FMN-binding positions include 71–73 (GMT), S104, and N132. 104–106 (SQR) is a binding site for substrate. Position 171 (Q171) interacts with substrate. E172 contributes to the Mg(2+) binding site. FMN-binding positions include K203, T233, 282–284 (GMR), and 303–304 (AL).

It belongs to the IPP isomerase type 2 family. As to quaternary structure, homooctamer. Dimer of tetramers. It depends on FMN as a cofactor. The cofactor is NADPH. Mg(2+) is required as a cofactor.

The protein resides in the cytoplasm. It catalyses the reaction isopentenyl diphosphate = dimethylallyl diphosphate. Functionally, involved in the biosynthesis of isoprenoids. Catalyzes the 1,3-allylic rearrangement of the homoallylic substrate isopentenyl (IPP) to its allylic isomer, dimethylallyl diphosphate (DMAPP). This is Isopentenyl-diphosphate delta-isomerase from Thermococcus onnurineus (strain NA1).